Consider the following 245-residue polypeptide: 1-(5-phosphoribosyl)-5-[(5-phosphoribosylamino)methylideneamino] imidazole-4-carboxamide isomerase (245 aa).

The active-site Proton acceptor is D7. D129 acts as the Proton donor in catalysis.

This sequence belongs to the HisA/HisF family.

Its subcellular location is the cytoplasm. It carries out the reaction 1-(5-phospho-beta-D-ribosyl)-5-[(5-phospho-beta-D-ribosylamino)methylideneamino]imidazole-4-carboxamide = 5-[(5-phospho-1-deoxy-D-ribulos-1-ylimino)methylamino]-1-(5-phospho-beta-D-ribosyl)imidazole-4-carboxamide. It participates in amino-acid biosynthesis; L-histidine biosynthesis; L-histidine from 5-phospho-alpha-D-ribose 1-diphosphate: step 4/9. The sequence is that of 1-(5-phosphoribosyl)-5-[(5-phosphoribosylamino)methylideneamino] imidazole-4-carboxamide isomerase from Shigella boydii serotype 4 (strain Sb227).